Here is a 342-residue protein sequence, read N- to C-terminus: Replication factor C subunit 4 (342 aa).

ATP-binding positions include V24, V36, G61–T68, N157, and R215.

This sequence belongs to the activator 1 small subunits family. In terms of assembly, heteropentamer of subunits rfc1, rfc2, rfc3, rfc4 and rfc5 that forms a complex (RFC) with PCNA in the presence of ATP. Two other complexes exist where rfc1 can be replaced by either ctf18 or elg1 to form the ctf18-RFC or the elg1-RFC complexes respectively.

The protein resides in the nucleus. The elongation of primed DNA templates by DNA polymerase delta and epsilon requires the action of the accessory proteins PCNA and activator 1. The chain is Replication factor C subunit 4 (rfc4) from Schizosaccharomyces pombe (strain 972 / ATCC 24843) (Fission yeast).